The sequence spans 395 residues: G-protein coupled receptor 182 (395 aa).

Residues 1 to 53 are Extracellular-facing; the sequence is MSVIPSSRPVSTLAPDNDFREIHNWTELLHLFNQTFSDCHMELNENTKQVVLF. Asn-24 and Asn-33 each carry an N-linked (GlcNAc...) asparagine glycan. The helical transmembrane segment at 54-75 threads the bilayer; that stretch reads VFYLAIFVVGLVENVLVICVNC. The Cytoplasmic portion of the chain corresponds to 76–86; that stretch reads RRSGRVGMLNL. A helical transmembrane segment spans residues 87 to 109; the sequence is YILNMAVADLGIILSLPVWMLEV. Residues 110–123 lie on the Extracellular side of the membrane; that stretch reads MLEYTWLWGSFSCR. Cys-122 and Cys-198 are oxidised to a cystine. A helical transmembrane segment spans residues 124 to 145; sequence FIHYFYLANMYSSIFFLTCLSI. At 146-166 the chain is on the cytoplasmic side; sequence DRYVTLTNTSPSWQRHQHRIR. A helical transmembrane segment spans residues 167–189; it reads RAVCAGVWVLSAIIPLPEVVHIQ. Residues 190 to 213 lie on the Extracellular side of the membrane; the sequence is LLDGSEPMCLFLAPFETYSAWALA. Residues 214–235 form a helical membrane-spanning segment; it reads VALSATILGFLLPFPLIAVFNI. The Cytoplasmic portion of the chain corresponds to 236 to 254; that stretch reads LSACRLRRQGQTESRRHCL. Residues 255 to 276 traverse the membrane as a helical segment; the sequence is LMWAYIVVFVICWLPYHVTMLL. Residues 277-295 lie on the Extracellular side of the membrane; that stretch reads LTLHTTHIFLHCNLVNFLY. The chain crosses the membrane as a helical span at residues 296 to 316; it reads FFYEIIDCFSMLHCVANPILY. Topologically, residues 317–395 are cytoplasmic; that stretch reads NFLSPSFRGR…RTPHLHSAIP (79 aa). The residue at position 329 (Ser-329) is a Phosphoserine.

The protein belongs to the G-protein coupled receptor 1 family. In terms of tissue distribution, expressed in a wide variety of peripheral tissues in the adult rat with prominent expression in lung, testis, adrenal and liver.

Its subcellular location is the cell membrane. Orphan receptor. The sequence is that of G-protein coupled receptor 182 (Gpr182) from Rattus norvegicus (Rat).